The sequence spans 785 residues: Polyribonucleotide nucleotidyltransferase (785 aa).

Mg(2+) contacts are provided by Asp516 and Asp522. The region spanning 582-641 (PRVTTVKIPVDKIGMVIGPKGQTINAIQDETGAEISIEDDGTIYVGATNGPAAQAAVERI) is the KH domain. The S1 motif domain occupies 653-722 (GDRFLGTVVK…QRGKIYLDKV (70 aa)). A disordered region spans residues 722 to 785 (VRPEGAEAPA…SRPRRRTRRS (64 aa)). Residues 734–764 (AAERPAGRDRGDRGPRDRGDRGGRGPDRGDS) are compositionally biased toward basic and acidic residues.

The protein belongs to the polyribonucleotide nucleotidyltransferase family. Requires Mg(2+) as cofactor.

The protein resides in the cytoplasm. It catalyses the reaction RNA(n+1) + phosphate = RNA(n) + a ribonucleoside 5'-diphosphate. Functionally, involved in mRNA degradation. Catalyzes the phosphorolysis of single-stranded polyribonucleotides processively in the 3'- to 5'-direction. The chain is Polyribonucleotide nucleotidyltransferase from Salinispora tropica (strain ATCC BAA-916 / DSM 44818 / JCM 13857 / NBRC 105044 / CNB-440).